We begin with the raw amino-acid sequence, 102 residues long: Small ribosomal subunit protein uS10 (102 aa).

It belongs to the universal ribosomal protein uS10 family. As to quaternary structure, part of the 30S ribosomal subunit.

Functionally, involved in the binding of tRNA to the ribosomes. This Bifidobacterium longum subsp. infantis (strain ATCC 15697 / DSM 20088 / JCM 1222 / NCTC 11817 / S12) protein is Small ribosomal subunit protein uS10.